Here is a 612-residue protein sequence, read N- to C-terminus: Netrin unc-6 (612 aa).

The first 21 residues, 1–21 (MITSVLRYVLALYFCMGIAHG), serve as a signal peptide directing secretion. One can recognise a Laminin N-terminal domain in the interval 43–290 (RPVRCVPEFI…SMGELAVGGR (248 aa)). N114, N128, and N268 each carry an N-linked (GlcNAc...) asparagine glycan. An intrachain disulfide couples C117 to C149. Disulfide bonds link C291–C300, C293–C310, C312–C321, C324–C344, C347–C356, C349–C374, C377–C386, C389–C407, C410–C422, C412–C429, C431–C440, C443–C457, C478–C547, and C494–C604. Laminin EGF-like domains follow at residues 291–346 (CKCN…SCVA), 347–409 (CNCN…ACKS), and 410–459 (CGCH…PCIK). An N-linked (GlcNAc...) asparagine glycan is attached at N368. A glycan (N-linked (GlcNAc...) asparagine) is linked at N423. The 127-residue stretch at 478–604 (CSKCRIVPKR…FSKKDKLGQC (127 aa)) folds into the NTR domain. N-linked (GlcNAc...) asparagine glycosylation occurs at N564.

As to quaternary structure, binds to unc-5 and unc-40 receptors.

The protein resides in the secreted. The protein localises to the extracellular space. Its subcellular location is the extracellular matrix. It is found in the basement membrane. Its function is as follows. Component of an extracellular matrix cue that guides dorsoventral migrations on the epidermis. Required for the guidance of pioneer axons and migrating cells along the body wall. In particular, it is required for the guidance of axons from neurons, including SubL neurons and AIY interneurons, into the nerve ring. During gonad morphogenesis, involved in distal tip cell (DTC) migration from the dorsal side of the hermaphrodite body to the midbody to allow for formation of gonad arms. Its association with either unc-40 or unc-5 receptors will lead to axon attraction or repulsion, respectively. Involved in dendritic morphogenesis; may act by association with unc-40 at the tips of growing dendrites for interaction with unc-5 on the apposing branch to induce mutual repulsion. Involved in the positioning of ray 1, the most anterior ray sensilium, in the male tail. Required for the formation of synapses between the AVA interneurons and the PHB sensory neurons. In Caenorhabditis elegans, this protein is Netrin unc-6.